Reading from the N-terminus, the 131-residue chain is Fumarate reductase subunit C (131 aa).

Helical transmembrane passes span 30 to 50 (EGTA…LFAL), 57 to 77 (WMGF…LITL), and 109 to 129 (IIKG…YVAL).

Belongs to the FrdC family. As to quaternary structure, part of an enzyme complex containing four subunits: a flavoprotein (FrdA), an iron-sulfur protein (FrdB), and two hydrophobic anchor proteins (FrdC and FrdD).

It localises to the cell inner membrane. Its function is as follows. Two distinct, membrane-bound, FAD-containing enzymes are responsible for the catalysis of fumarate and succinate interconversion; fumarate reductase is used in anaerobic growth, and succinate dehydrogenase is used in aerobic growth. Anchors the catalytic components of the fumarate reductase complex to the cell inner membrane, binds quinones. The sequence is that of Fumarate reductase subunit C from Salmonella dublin (strain CT_02021853).